We begin with the raw amino-acid sequence, 327 residues long: Serine/threonine-protein phosphatase 4 regulatory subunit ppfr-4 (327 aa).

The stretch at lysine 141–leucine 185 forms a coiled coil. The tract at residues lysine 271–glycine 327 is disordered. Polar residues predominate over residues asparagine 275–alanine 284. Acidic residues predominate over residues glutamine 291 to glutamate 301. The span at alanine 302–arginine 318 shows a compositional bias: basic and acidic residues.

Serine/threonine-protein phosphatase 4 (PP4) occurs in different assemblies of the catalytic and one or more regulatory subunits. The catalytic subunit is likely to be pph-4.1.

Its function is as follows. Probable regulatory subunit of serine/threonine-protein phosphatase PP4 which may play a role in meiosis and embryonic mitosis. Probably in association with catalytic subunit pph-4.1, regulates microtubule severing during oocyte meiosis II by dephosphorylating and likely activating mei-1, a component of the katanin microtubule severing complex. The chain is Serine/threonine-protein phosphatase 4 regulatory subunit ppfr-4 from Caenorhabditis elegans.